The primary structure comprises 125 residues: Histone H2A (125 aa).

Residues 1-18 (MSGRGKGGKAKGKSKSRS) are compositionally biased toward basic residues. Residues 1–23 (MSGRGKGGKAKGKSKSRSSRAGL) form a disordered region. S2 carries the N-acetylserine modification. The residue at position 2 (S2) is a Phosphoserine. Q104 is subject to N5-methylglutamine.

It belongs to the histone H2A family. The nucleosome is a histone octamer containing two molecules each of H2A, H2B, H3 and H4 assembled in one H3-H4 heterotetramer and two H2A-H2B heterodimers. The octamer wraps approximately 147 bp of DNA.

It localises to the nucleus. The protein localises to the chromosome. Core component of nucleosome. Nucleosomes wrap and compact DNA into chromatin, limiting DNA accessibility to the cellular machineries which require DNA as a template. Histones thereby play a central role in transcription regulation, DNA repair, DNA replication and chromosomal stability. DNA accessibility is regulated via a complex set of post-translational modifications of histones, also called histone code, and nucleosome remodeling. The chain is Histone H2A from Urechis caupo (Innkeeper worm).